A 91-amino-acid chain; its full sequence is Small ribosomal subunit protein uS19 (91 aa).

This sequence belongs to the universal ribosomal protein uS19 family.

Its function is as follows. Protein S19 forms a complex with S13 that binds strongly to the 16S ribosomal RNA. The protein is Small ribosomal subunit protein uS19 of Halorhodospira halophila (strain DSM 244 / SL1) (Ectothiorhodospira halophila (strain DSM 244 / SL1)).